The primary structure comprises 237 residues: Uridylate kinase (237 aa).

9 to 12 (KLSG) contacts ATP. Gly51 serves as a coordination point for UMP. 2 residues coordinate ATP: Gly52 and Arg56. Residues Asp71 and 132–139 (CGNPFFTT) contribute to the UMP site. 3 residues coordinate ATP: Thr159, Tyr165, and Asp168.

Belongs to the UMP kinase family. As to quaternary structure, homohexamer.

It is found in the cytoplasm. The catalysed reaction is UMP + ATP = UDP + ADP. It participates in pyrimidine metabolism; CTP biosynthesis via de novo pathway; UDP from UMP (UMPK route): step 1/1. Inhibited by UTP. Its function is as follows. Catalyzes the reversible phosphorylation of UMP to UDP. In Prochlorococcus marinus (strain MIT 9313), this protein is Uridylate kinase.